We begin with the raw amino-acid sequence, 332 residues long: ATP-dependent 6-phosphofructokinase (332 aa).

Gly-11 contributes to the ATP binding site. 21 to 25 (RSVVR) lines the ADP pocket. ATP contacts are provided by residues 72–73 (RC) and 102–105 (GDGS). Position 103 (Asp-103) interacts with Mg(2+). 126–128 (TID) lines the substrate pocket. The active-site Proton acceptor is the Asp-128. ADP is bound at residue Arg-155. Residues Arg-163 and 170 to 172 (MGR) contribute to the substrate site. ADP contacts are provided by residues 186-188 (GAE), Arg-212, and 214-216 (KLH). Substrate-binding positions include Glu-223, Arg-256, and 262 to 265 (HIQR).

This sequence belongs to the phosphofructokinase type A (PFKA) family. ATP-dependent PFK group I subfamily. Prokaryotic clade 'B1' sub-subfamily. As to quaternary structure, homotetramer. Mg(2+) serves as cofactor.

Its subcellular location is the cytoplasm. It carries out the reaction beta-D-fructose 6-phosphate + ATP = beta-D-fructose 1,6-bisphosphate + ADP + H(+). The protein operates within carbohydrate degradation; glycolysis; D-glyceraldehyde 3-phosphate and glycerone phosphate from D-glucose: step 3/4. Its activity is regulated as follows. Allosterically activated by ADP and other diphosphonucleosides, and allosterically inhibited by phosphoenolpyruvate. Its function is as follows. Catalyzes the phosphorylation of D-fructose 6-phosphate to fructose 1,6-bisphosphate by ATP, the first committing step of glycolysis. The polypeptide is ATP-dependent 6-phosphofructokinase (Halothermothrix orenii (strain H 168 / OCM 544 / DSM 9562)).